A 506-amino-acid chain; its full sequence is Cysteine--tRNA ligase (506 aa).

Cysteine 43 is a binding site for Zn(2+). The 'HIGH' region motif lies at 45–55 (VTVYDLCHLGH). Residues cysteine 237, histidine 262, and glutamate 266 each contribute to the Zn(2+) site. Residues 294 to 298 (KMSKS) carry the 'KMSKS' region motif. Residue lysine 297 coordinates ATP.

This sequence belongs to the class-I aminoacyl-tRNA synthetase family. As to quaternary structure, monomer. The cofactor is Zn(2+).

It localises to the cytoplasm. The enzyme catalyses tRNA(Cys) + L-cysteine + ATP = L-cysteinyl-tRNA(Cys) + AMP + diphosphate. The polypeptide is Cysteine--tRNA ligase (Synechococcus sp. (strain JA-3-3Ab) (Cyanobacteria bacterium Yellowstone A-Prime)).